We begin with the raw amino-acid sequence, 431 residues long: Mannan endo-1,4-beta-mannosidase 5 (431 aa).

The first 24 residues, 1-24 (MVPTRNRPMLRILGFFICAAFIYL), serve as a signal peptide directing secretion. An N-linked (GlcNAc...) asparagine glycan is attached at Asn45. Trp97 serves as a coordination point for substrate. N-linked (GlcNAc...) asparagine glycosylation occurs at Asn168. Asn213 contributes to the substrate binding site. Catalysis depends on Glu214, which acts as the Proton donor. An N-linked (GlcNAc...) asparagine glycan is attached at Asn282. Residue Tyr294 coordinates substrate. Asn301 carries N-linked (GlcNAc...) asparagine glycosylation. Catalysis depends on Glu334, which acts as the Nucleophile. Residue Trp376 participates in substrate binding.

The protein belongs to the glycosyl hydrolase 5 (cellulase A) family. In terms of tissue distribution, expressed in stems.

The protein localises to the secreted. It carries out the reaction Random hydrolysis of (1-&gt;4)-beta-D-mannosidic linkages in mannans, galactomannans and glucomannans.. The protein is Mannan endo-1,4-beta-mannosidase 5 (MAN5) of Arabidopsis thaliana (Mouse-ear cress).